The primary structure comprises 169 residues: S-ribosylhomocysteine lyase (169 aa).

Fe cation contacts are provided by His54, His58, and Cys128.

Belongs to the LuxS family. Homodimer. Requires Fe cation as cofactor.

It carries out the reaction S-(5-deoxy-D-ribos-5-yl)-L-homocysteine = (S)-4,5-dihydroxypentane-2,3-dione + L-homocysteine. In terms of biological role, involved in the synthesis of autoinducer 2 (AI-2) which is secreted by bacteria and is used to communicate both the cell density and the metabolic potential of the environment. The regulation of gene expression in response to changes in cell density is called quorum sensing. Catalyzes the transformation of S-ribosylhomocysteine (RHC) to homocysteine (HC) and 4,5-dihydroxy-2,3-pentadione (DPD). This Sulfurovum sp. (strain NBC37-1) protein is S-ribosylhomocysteine lyase.